The primary structure comprises 638 residues: 1-deoxy-D-xylulose-5-phosphate synthase (638 aa).

Thiamine diphosphate-binding positions include histidine 76 and 117 to 119 (AHS). Residue aspartate 148 participates in Mg(2+) binding. Residues 149–150 (GS), asparagine 177, tyrosine 287, and glutamate 369 contribute to the thiamine diphosphate site. Mg(2+) is bound at residue asparagine 177.

Belongs to the transketolase family. DXPS subfamily. As to quaternary structure, homodimer. Requires Mg(2+) as cofactor. It depends on thiamine diphosphate as a cofactor.

It carries out the reaction D-glyceraldehyde 3-phosphate + pyruvate + H(+) = 1-deoxy-D-xylulose 5-phosphate + CO2. Its pathway is metabolic intermediate biosynthesis; 1-deoxy-D-xylulose 5-phosphate biosynthesis; 1-deoxy-D-xylulose 5-phosphate from D-glyceraldehyde 3-phosphate and pyruvate: step 1/1. In terms of biological role, catalyzes the acyloin condensation reaction between C atoms 2 and 3 of pyruvate and glyceraldehyde 3-phosphate to yield 1-deoxy-D-xylulose-5-phosphate (DXP). The polypeptide is 1-deoxy-D-xylulose-5-phosphate synthase (Rhodopseudomonas palustris (strain HaA2)).